The following is a 268-amino-acid chain: Exodeoxyribonuclease III (268 aa).

Glu-34 serves as a coordination point for Mg(2+). Residue Tyr-109 is part of the active site. Positions 151, 153, and 258 each coordinate Mg(2+). The active-site Proton donor/acceptor is the Asp-151.

The protein belongs to the DNA repair enzymes AP/ExoA family. Monomer. Mg(2+) serves as cofactor. Requires Mn(2+) as cofactor.

The enzyme catalyses Exonucleolytic cleavage in the 3'- to 5'-direction to yield nucleoside 5'-phosphates.. Functionally, major apurinic-apyrimidinic endonuclease of E.coli. It removes the damaged DNA at cytosines and guanines by cleaving on the 3'-side of the AP site by a beta-elimination reaction. It exhibits 3'-5'-exonuclease, 3'-phosphomonoesterase, 3'-repair diesterase and ribonuclease H activities. This chain is Exodeoxyribonuclease III (xthA), found in Salmonella typhi.